A 326-amino-acid chain; its full sequence is Dipeptide transport ATP-binding protein DppD (326 aa).

The ABC transporter domain maps to Ile5–Ile255. Residues Ala44–Thr49, Asn61, and Gln97 contribute to the ATP site. [4Fe-4S] cluster contacts are provided by Cys285, Cys291, Cys298, and Cys316.

It belongs to the ABC transporter superfamily.

The protein localises to the cell membrane. It carries out the reaction a dipeptide(out) + ATP + H2O = a dipeptide(in) + ADP + phosphate + H(+). The C-terminal iron-sulfur cluster may stabilize the structure of the C-terminal loops and may function in the regulation of the transport process. Its function is as follows. Part of the ABC transporter Dpp involved in dipeptide transport. Responsible for energy coupling to the transport system. The sequence is that of Dipeptide transport ATP-binding protein DppD from Caldanaerobacter subterraneus subsp. tengcongensis (strain DSM 15242 / JCM 11007 / NBRC 100824 / MB4) (Thermoanaerobacter tengcongensis).